The following is a 488-amino-acid chain: Solanidine UDP-glucose glucosyltransferase 1 (488 aa).

The active-site Proton acceptor is the H23. H23 contacts an anthocyanidin. The active-site Charge relay is the D127. V352, Q354, H369, N373, S374, and E377 together coordinate UDP-alpha-D-glucose. Residue A392 coordinates an anthocyanidin. D393 and Q394 together coordinate UDP-alpha-D-glucose.

The protein belongs to the UDP-glycosyltransferase family. Expressed in the shoot apical meristem (SAM) and tuber.

The enzyme catalyses solasodine + UDP-alpha-D-glucose = solasodine 3-beta-D-glucoside + UDP + H(+). It carries out the reaction solanidine + UDP-alpha-D-glucose = solanidine 3-O-beta-D-glucopyranoside + UDP + H(+). The catalysed reaction is tomatidine + UDP-alpha-D-glucose = tomatidine 3-O-beta-D-glucopyranoside + UDP + H(+). Glucosyltransferase involved in the glucosylation of the steroidal alkaloid aglycons solanidine, solasodine and tomatidine to produce their corresponding glycoalkaloids. The chain is Solanidine UDP-glucose glucosyltransferase 1 from Solanum tuberosum (Potato).